Reading from the N-terminus, the 194-residue chain is GTP cyclohydrolase 1 (194 aa).

Zn(2+) contacts are provided by C83, H86, and C155.

This sequence belongs to the GTP cyclohydrolase I family. Toroid-shaped homodecamer, composed of two pentamers of five dimers.

It carries out the reaction GTP + H2O = 7,8-dihydroneopterin 3'-triphosphate + formate + H(+). It functions in the pathway cofactor biosynthesis; 7,8-dihydroneopterin triphosphate biosynthesis; 7,8-dihydroneopterin triphosphate from GTP: step 1/1. This chain is GTP cyclohydrolase 1, found in Streptococcus pyogenes serotype M3 (strain ATCC BAA-595 / MGAS315).